The following is a 554-amino-acid chain: MESQTKFDYESLAFTKLSHSQWTDYFLSVPIDDSELDAITREIDIIKPEVRKLLSSKGDDETSKRKVLLIQSLLSLGLAFHFENEIKDILEDAFRRIDDITGDENDLSTISIMFRVFRTYGHNLPSSVFKRFTGDDGKFERSLTEDAKGILSLYEAAHLGTTTDYILDEALEFTSSHLKSLLVGGMCRPHILRLIRNTLYLPQRWNMEAVIAREYISFYEQEEDHDKMLLRLAKLNFKLLQLHYIKELKTFIKWWMELGLTSKWPSQFRERIVEAWLAGLMMYFEPQFSGGRVIAAKFNYLLTILDDACDHYFSIPELTRLVDCVERWNHDGIHTLEDISRIIFKLALDVFDDIGRGVRSKGCSYYLKEMLEELKILVRANLDLVKWARGNQLPSFEEHVEVGGIALTTYATLMYSFVGMGEAVGKEAYEWVRSRPRLIKSLAAKGRLMDDITDFESDMSNGFAANAINYYMKQFVVTKEEAILECQKMVVDINKIVNEELLKTTTVPRRVLKQALNFGRLLEVLYTKSDDIYNCSEGKLKEYIVTLLIDPIHL.

Residues Asp-306, Asp-310, Asp-450, and Asp-458 each coordinate Mg(2+). The DDXXD motif motif lies at 306-310 (DDACD).

It belongs to the terpene synthase family. Tpsa subfamily. Mg(2+) serves as cofactor. It depends on Mn(2+) as a cofactor. Predominantly expressed in roots. Expressed in the cortex and the sub-epidermal layers of roots. Also detected in leaf hydathodes and flower stigmata.

It is found in the cytoplasm. It catalyses the reaction (2E,6E)-farnesyl diphosphate = (Z)-gamma-bisabolene + diphosphate. Its pathway is secondary metabolite biosynthesis; terpenoid biosynthesis. Functionally, involved in sesquiterpene (C15) biosynthesis. The major product is (Z)-gamma-bisabolene with minor amounts of (E)-nerolidol and alpha-bisabolol. In Arabidopsis thaliana (Mouse-ear cress), this protein is (Z)-gamma-bisabolene synthase 2 (TPS13).